The sequence spans 94 residues: Large ribosomal subunit protein bL28 (94 aa).

This sequence belongs to the bacterial ribosomal protein bL28 family.

This Hyphomonas neptunium (strain ATCC 15444) protein is Large ribosomal subunit protein bL28.